The chain runs to 1366 residues: DNA-directed RNA polymerase subunit beta' (1366 aa).

Over residues 1-20 (MTSSKPKKTSRVRKTTKNSK) the composition is skewed to basic residues. The tract at residues 1 to 34 (MTSSKPKKTSRVRKTTKNSKKNNPLTMPALAKTP) is disordered. C248, C315, C322, and C325 together coordinate Zn(2+). The disordered stretch occupies residues 1291–1366 (YTVDMPQSPS…LQEEGLLSDE (76 aa)). The segment covering 1295–1305 (MPQSPSVSSTA) has biased composition (polar residues). Residues 1354-1366 (LEGLQEEGLLSDE) show a composition bias toward low complexity.

Belongs to the RNA polymerase beta' chain family. RpoC2 subfamily. As to quaternary structure, in cyanobacteria the RNAP catalytic core is composed of 2 alpha, 1 beta, 1 beta', 1 gamma and 1 omega subunit. When a sigma factor is associated with the core the holoenzyme is formed, which can initiate transcription. It depends on Zn(2+) as a cofactor.

It catalyses the reaction RNA(n) + a ribonucleoside 5'-triphosphate = RNA(n+1) + diphosphate. Functionally, DNA-dependent RNA polymerase catalyzes the transcription of DNA into RNA using the four ribonucleoside triphosphates as substrates. The sequence is that of DNA-directed RNA polymerase subunit beta' from Prochlorococcus marinus (strain MIT 9301).